The sequence spans 555 residues: Formate--tetrahydrofolate ligase (555 aa).

65–72 (TPAGEGKS) is an ATP binding site.

It belongs to the formate--tetrahydrofolate ligase family.

It carries out the reaction (6S)-5,6,7,8-tetrahydrofolate + formate + ATP = (6R)-10-formyltetrahydrofolate + ADP + phosphate. Its pathway is one-carbon metabolism; tetrahydrofolate interconversion. The chain is Formate--tetrahydrofolate ligase from Lactococcus lactis subsp. lactis (strain IL1403) (Streptococcus lactis).